Consider the following 110-residue polypeptide: Large ribosomal subunit protein uL22 (110 aa).

The protein belongs to the universal ribosomal protein uL22 family. Part of the 50S ribosomal subunit.

Functionally, this protein binds specifically to 23S rRNA; its binding is stimulated by other ribosomal proteins, e.g. L4, L17, and L20. It is important during the early stages of 50S assembly. It makes multiple contacts with different domains of the 23S rRNA in the assembled 50S subunit and ribosome. In terms of biological role, the globular domain of the protein is located near the polypeptide exit tunnel on the outside of the subunit, while an extended beta-hairpin is found that lines the wall of the exit tunnel in the center of the 70S ribosome. In Paraburkholderia phytofirmans (strain DSM 17436 / LMG 22146 / PsJN) (Burkholderia phytofirmans), this protein is Large ribosomal subunit protein uL22.